Here is a 335-residue protein sequence, read N- to C-terminus: L-tyrosine isonitrile synthase (335 aa).

This sequence belongs to the isocyanide synthase family.

The catalysed reaction is D-ribulose 5-phosphate + L-tyrosine = (2S)-3-(4-hydroxyphenyl)-2-isocyanopropanoate + hydroxyacetone + formaldehyde + phosphate + H2O + H(+). Involved in the biosynthesis of rhabduscin, a tyrosine derivative which is a potent inhibitor of phenoloxidase, a key component of the insect's innate immune system. Responsible for the synthesis of the isonitrile group on tyrosine using the C2 of ribulose 5-phosphate as the source of the carbon atom. The polypeptide is L-tyrosine isonitrile synthase (Xenorhabdus nematophila (strain ATCC 19061 / DSM 3370 / CCUG 14189 / LMG 1036 / NCIMB 9965 / AN6)).